A 184-amino-acid chain; its full sequence is Cysteine-rich atrial secretory protein (184 aa).

The signal sequence occupies residues 1-26 (MATFQAHFFAAVMCVGVLGLSKLCGA). 5 cysteine pairs are disulfide-bonded: cysteine 29–cysteine 34, cysteine 65–cysteine 111, cysteine 75–cysteine 82, cysteine 123–cysteine 155, and cysteine 135–cysteine 144. Asparagine 74 is a glycosylation site (N-linked (GlcNAc...) asparagine).

Post-translationally, N-glycosylated. As to expression, highly expressed in atrium. Moderately expressed in the pericardium, pulmonary vein, nephridium, arteria anterior, ovotestis and connective tissue. Low expression found in intestine, lung plexus, diaphragm, subesophageal ganglion, ventricle and digestive gland. Very low expression found in columellar retractor, pedal nerves and cerebral ganglion. Not expressed in hemocytes.

The protein localises to the secreted. In Achatina achatina (Giant Ghana snail), this protein is Cysteine-rich atrial secretory protein.